The following is a 418-amino-acid chain: Light-independent protochlorophyllide reductase subunit N (418 aa).

[4Fe-4S] cluster is bound by residues Cys-17, Cys-42, and Cys-103.

Belongs to the BchN/ChlN family. In terms of assembly, protochlorophyllide reductase is composed of three subunits; ChlL, ChlN and ChlB. Forms a heterotetramer of two ChlB and two ChlN subunits. The cofactor is [4Fe-4S] cluster.

The enzyme catalyses chlorophyllide a + oxidized 2[4Fe-4S]-[ferredoxin] + 2 ADP + 2 phosphate = protochlorophyllide a + reduced 2[4Fe-4S]-[ferredoxin] + 2 ATP + 2 H2O. It functions in the pathway porphyrin-containing compound metabolism; chlorophyll biosynthesis (light-independent). Its function is as follows. Component of the dark-operative protochlorophyllide reductase (DPOR) that uses Mg-ATP and reduced ferredoxin to reduce ring D of protochlorophyllide (Pchlide) to form chlorophyllide a (Chlide). This reaction is light-independent. The NB-protein (ChlN-ChlB) is the catalytic component of the complex. The protein is Light-independent protochlorophyllide reductase subunit N of Prochlorococcus marinus (strain MIT 9312).